Here is a 204-residue protein sequence, read N- to C-terminus: Ubiquitin-conjugating enzyme E2 T (204 aa).

The UBC core domain occupies 2 to 152 (QRASRLKKEL…AKQWTEAHAR (151 aa)). Cysteine 86 serves as the catalytic Glycyl thioester intermediate. Residues lysine 91 and lysine 181 each participate in a glycyl lysine isopeptide (Lys-Gly) (interchain with G-Cter in ubiquitin) cross-link. A disordered region spans residues 150-204 (HARQKQKADEEELGTSSEVGDSEESHSTQKRKARPLGGMEKKFSPDVQRVYPGPS). Residues lysine 190 and lysine 191 each participate in a glycyl lysine isopeptide (Lys-Gly) (interchain with G-Cter in SUMO2) cross-link. Serine 193 bears the Phosphoserine mark.

It belongs to the ubiquitin-conjugating enzyme family. As to quaternary structure, interacts with FANCL and BRCA1. In terms of processing, auto-ubiquitinated. Effects of auto-monoubiquitination at Lys-91 and Lys-181 are unclear.

It is found in the nucleus. It carries out the reaction S-ubiquitinyl-[E1 ubiquitin-activating enzyme]-L-cysteine + [E2 ubiquitin-conjugating enzyme]-L-cysteine = [E1 ubiquitin-activating enzyme]-L-cysteine + S-ubiquitinyl-[E2 ubiquitin-conjugating enzyme]-L-cysteine.. Its pathway is protein modification; protein ubiquitination. Functionally, accepts ubiquitin from the E1 complex and catalyzes its covalent attachment to other proteins. Catalyzes monoubiquitination. Involved in mitomycin-C (MMC)-induced DNA repair: acts as a specific E2 ubiquitin-conjugating enzyme for the Fanconi anemia complex by associating with E3 ubiquitin-protein ligase FANCL and catalyzing monoubiquitination of FANCD2, a key step in the DNA damage pathway. Also mediates monoubiquitination of FANCL and FANCI. May contribute to ubiquitination and degradation of BRCA1. In vitro able to promote polyubiquitination using all 7 ubiquitin Lys residues, but may prefer 'Lys-11'-, 'Lys-27'-, 'Lys-48'- and 'Lys-63'-linked polyubiquitination. This is Ubiquitin-conjugating enzyme E2 T (Ube2t) from Mus musculus (Mouse).